Reading from the N-terminus, the 482-residue chain is Bifunctional protein GlmU (482 aa).

The interval 1-238 (MSATSPAAVV…HREILGINNR (238 aa)) is pyrophosphorylase. Residues 12–15 (LAAG), Lys-26, Gln-79, and 84–85 (GT) contribute to the UDP-N-acetyl-alpha-D-glucosamine site. A Mg(2+)-binding site is contributed by Asp-110. Residues Gly-147, Glu-163, Asn-178, and Asn-236 each contribute to the UDP-N-acetyl-alpha-D-glucosamine site. Asn-236 lines the Mg(2+) pocket. The interval 239 to 259 (LQLAEARRLLNERLLERAMLA) is linker. The N-acetyltransferase stretch occupies residues 260–482 (GVTVVDPAST…ASSQETDGQS (223 aa)). The UDP-N-acetyl-alpha-D-glucosamine site is built by Arg-341 and Lys-359. Residue His-371 is the Proton acceptor of the active site. UDP-N-acetyl-alpha-D-glucosamine contacts are provided by Tyr-374 and Asn-385. Acetyl-CoA contacts are provided by residues Ala-388, 394–395 (NY), Ser-413, Ala-431, and Arg-448. The segment at 458 to 482 (VARKRPGSAAAQAAQASSQETDGQS) is disordered. Positions 465–476 (SAAAQAAQASSQ) are enriched in low complexity.

This sequence in the N-terminal section; belongs to the N-acetylglucosamine-1-phosphate uridyltransferase family. The protein in the C-terminal section; belongs to the transferase hexapeptide repeat family. As to quaternary structure, homotrimer. Mg(2+) serves as cofactor.

Its subcellular location is the cytoplasm. It catalyses the reaction alpha-D-glucosamine 1-phosphate + acetyl-CoA = N-acetyl-alpha-D-glucosamine 1-phosphate + CoA + H(+). The catalysed reaction is N-acetyl-alpha-D-glucosamine 1-phosphate + UTP + H(+) = UDP-N-acetyl-alpha-D-glucosamine + diphosphate. The protein operates within nucleotide-sugar biosynthesis; UDP-N-acetyl-alpha-D-glucosamine biosynthesis; N-acetyl-alpha-D-glucosamine 1-phosphate from alpha-D-glucosamine 6-phosphate (route II): step 2/2. It participates in nucleotide-sugar biosynthesis; UDP-N-acetyl-alpha-D-glucosamine biosynthesis; UDP-N-acetyl-alpha-D-glucosamine from N-acetyl-alpha-D-glucosamine 1-phosphate: step 1/1. It functions in the pathway bacterial outer membrane biogenesis; LPS lipid A biosynthesis. In terms of biological role, catalyzes the last two sequential reactions in the de novo biosynthetic pathway for UDP-N-acetylglucosamine (UDP-GlcNAc). The C-terminal domain catalyzes the transfer of acetyl group from acetyl coenzyme A to glucosamine-1-phosphate (GlcN-1-P) to produce N-acetylglucosamine-1-phosphate (GlcNAc-1-P), which is converted into UDP-GlcNAc by the transfer of uridine 5-monophosphate (from uridine 5-triphosphate), a reaction catalyzed by the N-terminal domain. This Streptomyces griseus subsp. griseus (strain JCM 4626 / CBS 651.72 / NBRC 13350 / KCC S-0626 / ISP 5235) protein is Bifunctional protein GlmU.